A 211-amino-acid polypeptide reads, in one-letter code: Ferritin heavy chain (211 aa).

The N-terminal stretch at 1–20 is a signal peptide; it reads MKAVLFAVAALLAVCIPISA. Residues 35 to 191 form the Ferritin-like diiron domain; that stretch reads ITMQQSCRGS…GKASTLKKML (157 aa). A disulfide bridge connects residues Cys-41 and Cys-150. Residues Glu-52, Glu-87, His-90, Glu-136, and Gln-173 each contribute to the Fe cation site.

This sequence belongs to the ferritin family. Oligomer of 12 light (L) chains and 12 heavy (H) chains; L and H chains are disulfide-linked. The functional molecule forms a roughly spherical shell with a diameter of 12 nm and contains a central cavity into which the insoluble ferric iron core is deposited.

The protein resides in the golgi apparatus. It localises to the secreted. It carries out the reaction 4 Fe(2+) + O2 + 4 H(+) = 4 Fe(3+) + 2 H2O. Its function is as follows. Stores iron in a soluble, non-toxic, readily available form. Important for iron homeostasis. Iron is taken up in the ferrous form and deposited as ferric hydroxides after oxidation. Ferritin is composed of a heavy (H) chain which is responsible for the oxidation and uptake of ferrous iron, and a light (L) chain which facilitates the nucleation of the ferrihydrite iron core. This Papilio xuthus (Asian swallowtail butterfly) protein is Ferritin heavy chain.